A 166-amino-acid polypeptide reads, in one-letter code: Sec-independent protein translocase protein TatB (166 aa).

Residues 2–22 (FDGIGFMELLLIGVLGLVVLG) form a helical membrane-spanning segment. Positions 69 to 166 (SKGLSNLSPE…DTRSNPKANG (98 aa)) are disordered. Composition is skewed to polar residues over residues 88–97 (QAAQSVNRPY) and 112–132 (QIYS…SQAN). Positions 133-153 (PTATVEASPAPASPATPSEPS) are enriched in low complexity. Over residues 155-166 (GADTRSNPKANG) the composition is skewed to polar residues.

It belongs to the TatB family. The Tat system comprises two distinct complexes: a TatABC complex, containing multiple copies of TatA, TatB and TatC subunits, and a separate TatA complex, containing only TatA subunits. Substrates initially bind to the TatABC complex, which probably triggers association of the separate TatA complex to form the active translocon.

It is found in the cell inner membrane. Part of the twin-arginine translocation (Tat) system that transports large folded proteins containing a characteristic twin-arginine motif in their signal peptide across membranes. Together with TatC, TatB is part of a receptor directly interacting with Tat signal peptides. TatB may form an oligomeric binding site that transiently accommodates folded Tat precursor proteins before their translocation. The protein is Sec-independent protein translocase protein TatB of Shewanella baltica (strain OS155 / ATCC BAA-1091).